A 137-amino-acid polypeptide reads, in one-letter code: Putative pre-16S rRNA nuclease (137 aa).

It belongs to the YqgF nuclease family.

It is found in the cytoplasm. Functionally, could be a nuclease involved in processing of the 5'-end of pre-16S rRNA. The chain is Putative pre-16S rRNA nuclease from Flavobacterium psychrophilum (strain ATCC 49511 / DSM 21280 / CIP 103535 / JIP02/86).